The primary structure comprises 414 residues: Dual-specificity RNA methyltransferase RlmN (414 aa).

Glu127 functions as the Proton acceptor in the catalytic mechanism. A Radical SAM core domain is found at Gly133 to Asp380. The cysteines at positions 140 and 385 are disulfide-linked. 3 residues coordinate [4Fe-4S] cluster: Cys147, Cys151, and Cys154. S-adenosyl-L-methionine contacts are provided by residues Gly211–Glu212, Ser243, Ser265–His267, and Asn342. Cys385 functions as the S-methylcysteine intermediate in the catalytic mechanism.

This sequence belongs to the radical SAM superfamily. RlmN family. [4Fe-4S] cluster is required as a cofactor.

The protein localises to the cytoplasm. It catalyses the reaction adenosine(2503) in 23S rRNA + 2 reduced [2Fe-2S]-[ferredoxin] + 2 S-adenosyl-L-methionine = 2-methyladenosine(2503) in 23S rRNA + 5'-deoxyadenosine + L-methionine + 2 oxidized [2Fe-2S]-[ferredoxin] + S-adenosyl-L-homocysteine. It carries out the reaction adenosine(37) in tRNA + 2 reduced [2Fe-2S]-[ferredoxin] + 2 S-adenosyl-L-methionine = 2-methyladenosine(37) in tRNA + 5'-deoxyadenosine + L-methionine + 2 oxidized [2Fe-2S]-[ferredoxin] + S-adenosyl-L-homocysteine. Specifically methylates position 2 of adenine 2503 in 23S rRNA and position 2 of adenine 37 in tRNAs. m2A2503 modification seems to play a crucial role in the proofreading step occurring at the peptidyl transferase center and thus would serve to optimize ribosomal fidelity. This Bartonella bacilliformis (strain ATCC 35685 / KC583 / Herrer 020/F12,63) protein is Dual-specificity RNA methyltransferase RlmN.